The chain runs to 502 residues: Activin receptor type-1-like (502 aa).

A signal peptide spans 1–22 (MTLGSFRRGLLMLSVAFGLTRG). Residues 23–119 (DLAKPSKLVN…EEPEVDAHLP (97 aa)) lie on the Extracellular side of the membrane. The N-linked (GlcNAc...) asparagine glycan is linked to N32. 3 disulfide bridges follow: C33–C50, C35–C40, and C45–C68. The tract at residues 72 to 75 (NQEL) is mediates specificity for BMP ligand. 2 disulfides stabilise this stretch: C76-C88 and C89-C94. Residue N97 is glycosylated (N-linked (GlcNAc...) asparagine). A helical transmembrane segment spans residues 120–140 (LILGPVLALPVLVALGALGLW). Residues 141 to 502 (RVRRRQEKQR…HNPEKPKVIH (362 aa)) are Cytoplasmic-facing. S154, S159, and S160 each carry phosphoserine. A GS domain is found at 171-200 (SMLGDFLDSDCTTGSGSGLPFLVQRTVARQ). The Protein kinase domain maps to 201-502 (VALVECVGKG…HNPEKPKVIH (302 aa)). ATP is bound by residues 207–215 (VGKGRYGEV) and K228. The active-site Proton acceptor is the D329.

It belongs to the protein kinase superfamily. TKL Ser/Thr protein kinase family. TGFB receptor subfamily. In terms of assembly, interacts with TSC22D1/TSC-22. It depends on Mg(2+) as a cofactor. The cofactor is Mn(2+).

The protein localises to the cell membrane. It carries out the reaction L-threonyl-[receptor-protein] + ATP = O-phospho-L-threonyl-[receptor-protein] + ADP + H(+). It catalyses the reaction L-seryl-[receptor-protein] + ATP = O-phospho-L-seryl-[receptor-protein] + ADP + H(+). In terms of biological role, type I receptor for TGF-beta family ligands BMP9/GDF2 and BMP10 and important regulator of normal blood vessel development. On ligand binding, forms a receptor complex consisting of two type II and two type I transmembrane serine/threonine kinases. Type II receptors phosphorylate and activate type I receptors which autophosphorylate, then bind and activate SMAD transcriptional regulators. May bind activin as well. The polypeptide is Activin receptor type-1-like (Acvrl1) (Mus musculus (Mouse)).